Here is a 481-residue protein sequence, read N- to C-terminus: 6-phosphogluconate dehydrogenase, decarboxylating (481 aa).

NADP(+) is bound by residues 11-16 (GLAVMG), 34-36 (NRT), 76-78 (VKA), and N104. Substrate is bound by residues N104 and 130–132 (SGG). Residue K184 is the Proton acceptor of the active site. 187–188 (HN) contacts substrate. E191 acts as the Proton donor in catalysis. Y192, K259, R286, R445, and H451 together coordinate substrate.

The protein belongs to the 6-phosphogluconate dehydrogenase family. In terms of assembly, homodimer.

The enzyme catalyses 6-phospho-D-gluconate + NADP(+) = D-ribulose 5-phosphate + CO2 + NADPH. It participates in carbohydrate degradation; pentose phosphate pathway; D-ribulose 5-phosphate from D-glucose 6-phosphate (oxidative stage): step 3/3. Catalyzes the oxidative decarboxylation of 6-phosphogluconate to ribulose 5-phosphate and CO(2), with concomitant reduction of NADP to NADPH. In Ceratitis capitata (Mediterranean fruit fly), this protein is 6-phosphogluconate dehydrogenase, decarboxylating (Pgd).